The primary structure comprises 369 residues: Endophilin-A (369 aa).

One can recognise a BAR domain in the interval Thr18–Ser248. Positions Gln227–Glu247 form a coiled coil. Low complexity predominate over residues Gly275–Pro294. Residues Gly275–Lys296 form a disordered region. The SH3 domain occupies Gln305–Pro364.

The protein belongs to the endophilin family.

The protein localises to the cytoplasm. It localises to the membrane. Required presynaptically at the neuromuscular junction. Implicated in synaptic vesicle endocytosis. In Drosophila pseudoobscura pseudoobscura (Fruit fly), this protein is Endophilin-A.